The sequence spans 159 residues: Ribosomal RNA large subunit methyltransferase H (159 aa).

S-adenosyl-L-methionine contacts are provided by residues Leu-76, Gly-108, and 127-132 (FGLLTL).

The protein belongs to the RNA methyltransferase RlmH family. As to quaternary structure, homodimer.

The protein resides in the cytoplasm. The enzyme catalyses pseudouridine(1915) in 23S rRNA + S-adenosyl-L-methionine = N(3)-methylpseudouridine(1915) in 23S rRNA + S-adenosyl-L-homocysteine + H(+). In terms of biological role, specifically methylates the pseudouridine at position 1915 (m3Psi1915) in 23S rRNA. The protein is Ribosomal RNA large subunit methyltransferase H of Streptococcus pyogenes serotype M18 (strain MGAS8232).